Reading from the N-terminus, the 206-residue chain is Probable N-acetyltransferase 14 (206 aa).

The 152-residue stretch at 55 to 206 (LRFVLASFAL…TLVREFSKDL (152 aa)) folds into the N-acetyltransferase domain. The helical transmembrane segment at 57-77 (FVLASFALALLLPVFLAVTAV) threads the bilayer.

It belongs to the camello family.

The protein resides in the membrane. Probable acetyltransferase. Functionally, may act as a transcription factor regulating the expression of coproporphyrinogen oxidase by binding to a promoter regulatory element. In Macaca fascicularis (Crab-eating macaque), this protein is Probable N-acetyltransferase 14 (NAT14).